Here is an 82-residue protein sequence, read N- to C-terminus: Putative membrane protein insertion efficiency factor (82 aa).

It belongs to the UPF0161 family.

The protein resides in the cell inner membrane. Its function is as follows. Could be involved in insertion of integral membrane proteins into the membrane. The protein is Putative membrane protein insertion efficiency factor of Rickettsia massiliae (strain Mtu5).